Consider the following 317-residue polypeptide: Protoheme IX farnesyltransferase (317 aa).

8 helical membrane-spanning segments follow: residues Ile44 to Phe64, His93 to Cys113, Val116 to Tyr136, Leu143 to Ile163, Ala178 to Met198, Val221 to Pro241, Ala243 to Val263, and Leu288 to Gly308.

Belongs to the UbiA prenyltransferase family. Protoheme IX farnesyltransferase subfamily.

Its subcellular location is the cell membrane. It carries out the reaction heme b + (2E,6E)-farnesyl diphosphate + H2O = Fe(II)-heme o + diphosphate. It participates in porphyrin-containing compound metabolism; heme O biosynthesis; heme O from protoheme: step 1/1. In terms of biological role, converts heme B (protoheme IX) to heme O by substitution of the vinyl group on carbon 2 of heme B porphyrin ring with a hydroxyethyl farnesyl side group. This chain is Protoheme IX farnesyltransferase, found in Corynebacterium diphtheriae (strain ATCC 700971 / NCTC 13129 / Biotype gravis).